A 101-amino-acid polypeptide reads, in one-letter code: Chaperone modulatory protein CbpM (101 aa).

Belongs to the CbpM family.

Functionally, interacts with CbpA and inhibits both the DnaJ-like co-chaperone activity and the DNA binding activity of CbpA. Together with CbpA, modulates the activity of the DnaK chaperone system. Does not inhibit the co-chaperone activity of DnaJ. The protein is Chaperone modulatory protein CbpM of Pseudomonas putida (strain GB-1).